The chain runs to 409 residues: Putative competence-damage inducible protein (409 aa).

The protein belongs to the CinA family.

The protein is Putative competence-damage inducible protein of Clostridium botulinum (strain Okra / Type B1).